The primary structure comprises 357 residues: tRNA/tmRNA (uracil-C(5))-methyltransferase (357 aa).

Glutamine 180, tyrosine 209, asparagine 214, glutamate 230, and aspartate 290 together coordinate S-adenosyl-L-methionine. The active-site Nucleophile is the cysteine 315. Glutamate 349 functions as the Proton acceptor in the catalytic mechanism.

The protein belongs to the class I-like SAM-binding methyltransferase superfamily. RNA M5U methyltransferase family. TrmA subfamily.

The enzyme catalyses uridine(54) in tRNA + S-adenosyl-L-methionine = 5-methyluridine(54) in tRNA + S-adenosyl-L-homocysteine + H(+). It catalyses the reaction uridine(341) in tmRNA + S-adenosyl-L-methionine = 5-methyluridine(341) in tmRNA + S-adenosyl-L-homocysteine + H(+). Its function is as follows. Dual-specificity methyltransferase that catalyzes the formation of 5-methyluridine at position 54 (m5U54) in all tRNAs, and that of position 341 (m5U341) in tmRNA (transfer-mRNA). The chain is tRNA/tmRNA (uracil-C(5))-methyltransferase from Campylobacter jejuni subsp. jejuni serotype O:2 (strain ATCC 700819 / NCTC 11168).